The chain runs to 504 residues: ATP synthase subunit alpha (504 aa).

169 to 176 is an ATP binding site; the sequence is GDRQTGKT.

This sequence belongs to the ATPase alpha/beta chains family. F-type ATPases have 2 components, CF(1) - the catalytic core - and CF(0) - the membrane proton channel. CF(1) has five subunits: alpha(3), beta(3), gamma(1), delta(1), epsilon(1). CF(0) has three main subunits: a(1), b(2) and c(9-12). The alpha and beta chains form an alternating ring which encloses part of the gamma chain. CF(1) is attached to CF(0) by a central stalk formed by the gamma and epsilon chains, while a peripheral stalk is formed by the delta and b chains.

The protein localises to the cell membrane. The catalysed reaction is ATP + H2O + 4 H(+)(in) = ADP + phosphate + 5 H(+)(out). Produces ATP from ADP in the presence of a proton gradient across the membrane. The alpha chain is a regulatory subunit. The polypeptide is ATP synthase subunit alpha (Clostridium botulinum (strain Langeland / NCTC 10281 / Type F)).